The chain runs to 190 residues: Adenine phosphoribosyltransferase (190 aa).

This sequence belongs to the purine/pyrimidine phosphoribosyltransferase family. In terms of assembly, homodimer.

It is found in the cytoplasm. The enzyme catalyses AMP + diphosphate = 5-phospho-alpha-D-ribose 1-diphosphate + adenine. Its pathway is purine metabolism; AMP biosynthesis via salvage pathway; AMP from adenine: step 1/1. In terms of biological role, catalyzes a salvage reaction resulting in the formation of AMP, that is energically less costly than de novo synthesis. The polypeptide is Adenine phosphoribosyltransferase (Cupriavidus taiwanensis (strain DSM 17343 / BCRC 17206 / CCUG 44338 / CIP 107171 / LMG 19424 / R1) (Ralstonia taiwanensis (strain LMG 19424))).